Consider the following 491-residue polypeptide: 2,3-bisphosphoglycerate-independent phosphoglycerate mutase (491 aa).

Mn(2+)-binding residues include Asp-11 and Ser-61. Catalysis depends on Ser-61, which acts as the Phosphoserine intermediate. Residues His-118, 147 to 148 (RD), Arg-177, Arg-183, 248 to 251 (RSDR), and Lys-320 each bind substrate. Mn(2+) contacts are provided by Asp-386, His-390, Asp-427, His-428, and His-445.

It belongs to the BPG-independent phosphoglycerate mutase family. As to quaternary structure, monomer. The cofactor is Mn(2+).

It carries out the reaction (2R)-2-phosphoglycerate = (2R)-3-phosphoglycerate. It participates in carbohydrate degradation; glycolysis; pyruvate from D-glyceraldehyde 3-phosphate: step 3/5. Catalyzes the interconversion of 2-phosphoglycerate and 3-phosphoglycerate. The protein is 2,3-bisphosphoglycerate-independent phosphoglycerate mutase of Sulfurimonas denitrificans (strain ATCC 33889 / DSM 1251) (Thiomicrospira denitrificans (strain ATCC 33889 / DSM 1251)).